A 299-amino-acid polypeptide reads, in one-letter code: Formamidopyrimidine-DNA glycosylase (299 aa).

The Schiff-base intermediate with DNA role is filled by Pro2. Glu3 serves as the catalytic Proton donor. Lys58 serves as the catalytic Proton donor; for beta-elimination activity. DNA-binding residues include His106, Arg125, and Lys168. An FPG-type zinc finger spans residues 259–295 (RVYDRVGHACPTKGCTGRVGRIVQGGRSTFFCETCQV). Residue Arg285 is the Proton donor; for delta-elimination activity of the active site.

Belongs to the FPG family. Monomer. Zn(2+) is required as a cofactor.

It catalyses the reaction Hydrolysis of DNA containing ring-opened 7-methylguanine residues, releasing 2,6-diamino-4-hydroxy-5-(N-methyl)formamidopyrimidine.. The enzyme catalyses 2'-deoxyribonucleotide-(2'-deoxyribose 5'-phosphate)-2'-deoxyribonucleotide-DNA = a 3'-end 2'-deoxyribonucleotide-(2,3-dehydro-2,3-deoxyribose 5'-phosphate)-DNA + a 5'-end 5'-phospho-2'-deoxyribonucleoside-DNA + H(+). Involved in base excision repair of DNA damaged by oxidation or by mutagenic agents. Acts as a DNA glycosylase that recognizes and removes damaged bases. Has a preference for oxidized purines, such as 7,8-dihydro-8-oxoguanine (8-oxoG). Has AP (apurinic/apyrimidinic) lyase activity and introduces nicks in the DNA strand. Cleaves the DNA backbone by beta-delta elimination to generate a single-strand break at the site of the removed base with both 3'- and 5'-phosphates. The sequence is that of Formamidopyrimidine-DNA glycosylase from Methylorubrum extorquens (strain CM4 / NCIMB 13688) (Methylobacterium extorquens).